Consider the following 365-residue polypeptide: MSPELGGGYDGESPVSADLVAGDGDIEASLRPKNLHDFIGQPRVREQLQLVLTGAKMRGGTPDHILLSGPPGLGKTSMAMIIAAELGSSLRLTSGPALERAGDLAAMLSNLVEGDVLFIDEIHRIARPAEEMLYLAMEDFRVDVVVGKGPGATSIPLEVAPFTLVGATTRSGALTGPLRDRFGFTAHMDFYEPAELKQILMRSAGILGVQLGEEAGAEIASRSRGTPRIANRLLRRVRDYAEVRADGVVTREIAHAALAVYDVDQLGLDRLDRSVLSALVRSFGGGPVGVSTLAVAVGEEPATVEEVCEPFLVRAGMIARTPRGRVATAAAWTQLGLTPPPDAVTGGIDVRVNEPQASLFDPEDP.

The tract at residues 1–191 (MSPELGGGYD…FGFTAHMDFY (191 aa)) is large ATPase domain (RuvB-L). Residues L30, R31, G72, K75, T76, S77, 138–140 (EDF), R181, Y191, and R228 contribute to the ATP site. T76 contacts Mg(2+). The tract at residues 192-262 (EPAELKQILM…IAHAALAVYD (71 aa)) is small ATPAse domain (RuvB-S). The tract at residues 265–365 (QLGLDRLDRS…QASLFDPEDP (101 aa)) is head domain (RuvB-H). Residues R320 and R325 each contribute to the DNA site.

The protein belongs to the RuvB family. As to quaternary structure, homohexamer. Forms an RuvA(8)-RuvB(12)-Holliday junction (HJ) complex. HJ DNA is sandwiched between 2 RuvA tetramers; dsDNA enters through RuvA and exits via RuvB. An RuvB hexamer assembles on each DNA strand where it exits the tetramer. Each RuvB hexamer is contacted by two RuvA subunits (via domain III) on 2 adjacent RuvB subunits; this complex drives branch migration. In the full resolvosome a probable DNA-RuvA(4)-RuvB(12)-RuvC(2) complex forms which resolves the HJ.

The protein resides in the cytoplasm. The enzyme catalyses ATP + H2O = ADP + phosphate + H(+). Its function is as follows. The RuvA-RuvB-RuvC complex processes Holliday junction (HJ) DNA during genetic recombination and DNA repair, while the RuvA-RuvB complex plays an important role in the rescue of blocked DNA replication forks via replication fork reversal (RFR). RuvA specifically binds to HJ cruciform DNA, conferring on it an open structure. The RuvB hexamer acts as an ATP-dependent pump, pulling dsDNA into and through the RuvAB complex. RuvB forms 2 homohexamers on either side of HJ DNA bound by 1 or 2 RuvA tetramers; 4 subunits per hexamer contact DNA at a time. Coordinated motions by a converter formed by DNA-disengaged RuvB subunits stimulates ATP hydrolysis and nucleotide exchange. Immobilization of the converter enables RuvB to convert the ATP-contained energy into a lever motion, pulling 2 nucleotides of DNA out of the RuvA tetramer per ATP hydrolyzed, thus driving DNA branch migration. The RuvB motors rotate together with the DNA substrate, which together with the progressing nucleotide cycle form the mechanistic basis for DNA recombination by continuous HJ branch migration. Branch migration allows RuvC to scan DNA until it finds its consensus sequence, where it cleaves and resolves cruciform DNA. The chain is Holliday junction branch migration complex subunit RuvB from Rhodococcus opacus (strain B4).